We begin with the raw amino-acid sequence, 185 residues long: Large ribosomal subunit protein uL5 (185 aa).

It belongs to the universal ribosomal protein uL5 family. Part of the 50S ribosomal subunit; part of the 5S rRNA/L5/L18/L25 subcomplex. Contacts the 5S rRNA and the P site tRNA. Forms a bridge to the 30S subunit in the 70S ribosome.

In terms of biological role, this is one of the proteins that bind and probably mediate the attachment of the 5S RNA into the large ribosomal subunit, where it forms part of the central protuberance. In the 70S ribosome it contacts protein S13 of the 30S subunit (bridge B1b), connecting the 2 subunits; this bridge is implicated in subunit movement. Contacts the P site tRNA; the 5S rRNA and some of its associated proteins might help stabilize positioning of ribosome-bound tRNAs. The chain is Large ribosomal subunit protein uL5 from Parabacteroides distasonis (strain ATCC 8503 / DSM 20701 / CIP 104284 / JCM 5825 / NCTC 11152).